A 640-amino-acid polypeptide reads, in one-letter code: Threonine--tRNA ligase (640 aa).

Positions 1-61 constitute a TGS domain; that stretch reads MPVITLPDGS…SNDATLQIIT (61 aa). The segment at 242–533 is catalytic; the sequence is DHRKIGKQLD…LIEHYAGVFP (292 aa). Residues C333, H384, and H510 each contribute to the Zn(2+) site.

It belongs to the class-II aminoacyl-tRNA synthetase family. In terms of assembly, homodimer. It depends on Zn(2+) as a cofactor.

The protein resides in the cytoplasm. The catalysed reaction is tRNA(Thr) + L-threonine + ATP = L-threonyl-tRNA(Thr) + AMP + diphosphate + H(+). Catalyzes the attachment of threonine to tRNA(Thr) in a two-step reaction: L-threonine is first activated by ATP to form Thr-AMP and then transferred to the acceptor end of tRNA(Thr). Also edits incorrectly charged L-seryl-tRNA(Thr). The protein is Threonine--tRNA ligase of Pseudomonas putida (strain ATCC 47054 / DSM 6125 / CFBP 8728 / NCIMB 11950 / KT2440).